Reading from the N-terminus, the 338-residue chain is Fructose-1,6-bisphosphatase class 1 (338 aa).

The Mg(2+) site is built by E94, D116, L118, and D119. Substrate contacts are provided by residues 119 to 122 (DGSS), N210, and K276. A Mg(2+)-binding site is contributed by E282.

This sequence belongs to the FBPase class 1 family. In terms of assembly, homotetramer. Requires Mg(2+) as cofactor.

It localises to the cytoplasm. The catalysed reaction is beta-D-fructose 1,6-bisphosphate + H2O = beta-D-fructose 6-phosphate + phosphate. Its pathway is carbohydrate biosynthesis; gluconeogenesis. The protein is Fructose-1,6-bisphosphatase class 1 of Paraburkholderia phytofirmans (strain DSM 17436 / LMG 22146 / PsJN) (Burkholderia phytofirmans).